A 347-amino-acid polypeptide reads, in one-letter code: Fatty acid elongase 2 (347 aa).

At 1–62 (MNSLVTQYAA…PSEFQFIAGE (62 aa)) the chain is on the lumenal side. Asn32 carries an N-linked (GlcNAc...) asparagine glycan. The helical transmembrane segment at 63 to 83 (LPLSTLPPVLYAITAYYVIIF) threads the bilayer. The Cytoplasmic portion of the chain corresponds to 84 to 96 (GGRFLLSKSKPFK). A helical transmembrane segment spans residues 97-119 (LNGLFQLHNLVLTSLSLTLLLLM). Residues 120–122 (VEQ) lie on the Lumenal side of the membrane. A helical transmembrane segment spans residues 123–142 (LVPIIVQHGLYFAICNIGAW). Residues 143–146 (TQPL) are Cytoplasmic-facing. The helical transmembrane segment at 147-169 (VTLYYMNYIVKFIEFIDTFFLVL) threads the bilayer. Topologically, residues 170–200 (KHKKLTFLHTYHHGATALLCYTQLMGTTSIS) are lumenal. A HxxHH motif motif is present at residues 178 to 182 (HTYHH). Residues 201–221 (WVPISLNLGVHVVMYWYYFLA) form a helical membrane-spanning segment. The Cytoplasmic portion of the chain corresponds to 222 to 231 (ARGIRVWWKE). A helical transmembrane segment spans residues 232–254 (WVTRFQIIQFVLDIGFIYFAVYQ). The Lumenal portion of the chain corresponds to 255 to 275 (KAVHLYFPILPHCGDCVGSTT). The helical transmembrane segment at 276–296 (ATFAGCAIISSYLVLFISFYI) threads the bilayer. The Cytoplasmic portion of the chain corresponds to 297 to 347 (NVYKRKGTKTSRVVKRAHGGVAAKVNEYVNVDLKNVPTPSPSPKPQHRRKR). At Thr334 the chain carries Phosphothreonine. 2 positions are modified to phosphoserine: Ser336 and Ser338. Residues 344 to 347 (RRKR) carry the Di-lysine-like motif motif.

This sequence belongs to the ELO family.

It localises to the endoplasmic reticulum membrane. It carries out the reaction a very-long-chain acyl-CoA + malonyl-CoA + H(+) = a very-long-chain 3-oxoacyl-CoA + CO2 + CoA. The enzyme catalyses octadecanoyl-CoA + malonyl-CoA + H(+) = 3-oxoeicosanoyl-CoA + CO2 + CoA. It catalyses the reaction hexadecanoyl-CoA + malonyl-CoA + H(+) = 3-oxooctadecanoyl-CoA + CO2 + CoA. The catalysed reaction is eicosanoyl-CoA + malonyl-CoA + H(+) = 3-oxodocosanoyl-CoA + CO2 + CoA. It carries out the reaction docosanoyl-CoA + malonyl-CoA + H(+) = 3-oxotetracosanoyl-CoA + CO2 + CoA. Functionally, component of a microsomal membrane-bound long-chain fatty acid elongation system, which produces the 20-26-carbon very long-chain fatty acids (VLCFA) from long-chain fatty acid precursors and is involved ceramide and inositol sphingolipid biosynthesis. Component of elongase II, which elongates 16-18 carbon fatty acyl-CoAs such as palmitoyl-CoA and stearoyl-CoA to 20-22-carbon fatty acids by incorporation of malonyl-CoA. Involved in the synthesis of 1,3-beta-glucan. The enzymes active site faces the cytosol, whereas VLCFA length is determined by a lysine near the luminal end of transmembrane helix 6. Plays an important role in lipotoxic cell death induced by oleic acid through maintaining a balanced fatty acid composition in thr plasma membrane. The polypeptide is Fatty acid elongase 2 (Saccharomyces cerevisiae (strain ATCC 204508 / S288c) (Baker's yeast)).